The chain runs to 278 residues: ATP-dependent dethiobiotin synthetase BioD 1 (278 aa).

Residue 51 to 56 (NVGKTI) participates in ATP binding. Thr55 serves as a coordination point for Mg(2+). Lys76 is an active-site residue. Asp102 contributes to the ATP binding site. Mg(2+) contacts are provided by Asp102 and Glu163. ATP-binding positions include 223–224 (NR) and 252–254 (PYI).

This sequence belongs to the dethiobiotin synthetase family. Homodimer. Mg(2+) serves as cofactor.

The protein localises to the cytoplasm. The catalysed reaction is (7R,8S)-7,8-diammoniononanoate + CO2 + ATP = (4R,5S)-dethiobiotin + ADP + phosphate + 3 H(+). It functions in the pathway cofactor biosynthesis; biotin biosynthesis; biotin from 7,8-diaminononanoate: step 1/2. Its function is as follows. Catalyzes a mechanistically unusual reaction, the ATP-dependent insertion of CO2 between the N7 and N8 nitrogen atoms of 7,8-diaminopelargonic acid (DAPA, also called 7,8-diammoniononanoate) to form a ureido ring. This Haemophilus ducreyi (strain 35000HP / ATCC 700724) protein is ATP-dependent dethiobiotin synthetase BioD 1.